Here is a 144-residue protein sequence, read N- to C-terminus: Maximins z/Hv (144 aa).

The first 18 residues, 1 to 18, serve as a signal peptide directing secretion; that stretch reads MNFKYIVAVSFLIASGYA. Residues 19–43 constitute a propeptide that is removed on maturation; it reads RSEENDVQSLSQREVLEEESLREIR. At Asn70 the chain carries Asparagine amide. The propeptide occupies 74 to 123; sequence TAEDHEVMKRLKAVMRDLDSLDHPEEASERETRGFNQEEIANLFTKKEKR. Isoleucine amide is present on Ile143.

This sequence belongs to the bombinin family. As to expression, expressed by the skin glands.

Its subcellular location is the secreted. In terms of biological role, maximin-z shows antimicrobial activity against bacteria and against the fungus C.albicans. It has little hemolytic activity. Maximin-Hv shows antimicrobial activity against bacteria and against the fungus C.albicans. Shows strong hemolytic activity. In Bombina maxima (Giant fire-bellied toad), this protein is Maximins z/Hv.